A 595-amino-acid polypeptide reads, in one-letter code: Actin-histidine N-methyltransferase (595 aa).

The interval 1-22 is disordered; it reads MGKKSRVKTQKSGTGATATVSP. Positions 10–20 are enriched in polar residues; it reads QKSGTGATATV. S-adenosyl-L-methionine is bound by residues R75, 104–106, R254, 275–279, and 325–327; these read EGF, DMCNH, and SGF. The region spanning 94 to 314 is the SET domain; that stretch reads EGFEMVNFKE…AGEQIYIFYG (221 aa). S513 bears the Phosphoserine mark. The span at 549 to 572 shows a compositional bias: polar residues; that stretch reads ENGLVNGENSVPNGTRSENENLNQ. The disordered stretch occupies residues 549–595; the sequence is ENGLVNGENSVPNGTRSENENLNQEESKRAVEDAKGSSSDNTAEVKE. A compositionally biased stretch (basic and acidic residues) spans 573–583; that stretch reads EESKRAVEDAK. Residues 584 to 595 are compositionally biased toward polar residues; that stretch reads GSSSDNTAEVKE.

Belongs to the class V-like SAM-binding methyltransferase superfamily. SETD3 actin-histidine methyltransferase family. Interacts with MYOD1. Phosphorylated by GSK3B, which is required for recognition by the SCF(FBXW7) complex and subsequent degradation. In terms of processing, ubiquitinated by the SCF(FBXW7) complex following phosphorylation by GSK3B, leading to its degradation by the proteasome.

Its subcellular location is the cytoplasm. It localises to the nucleus. It catalyses the reaction L-histidyl-[protein] + S-adenosyl-L-methionine = N(tele)-methyl-L-histidyl-[protein] + S-adenosyl-L-homocysteine + H(+). In terms of biological role, protein-histidine N-methyltransferase that specifically mediates 3-methylhistidine (tele-methylhistidine) methylation of actin at 'His-73'. Histidine methylation of actin is required for smooth muscle contraction of the laboring uterus during delivery. Does not have protein-lysine N-methyltransferase activity and probably only catalyzes histidine methylation of actin. In Papio anubis (Olive baboon), this protein is Actin-histidine N-methyltransferase.